Here is a 292-residue protein sequence, read N- to C-terminus: Tetratricopeptide repeat protein 1 (292 aa).

The interval 23-125 (TQEAECAGPP…STRLKEEGNE (103 aa)) is disordered. Composition is skewed to basic and acidic residues over residues 45–55 (LLRDDEAHLQE) and 75–85 (GADKVENKSNE). Ser83 and Ser90 each carry phosphoserine. Residues 99-125 (ELEKNMSDEEKQKRREESTRLKEEGNE) show a composition bias toward basic and acidic residues. TPR repeat units follow at residues 116 to 149 (STRLKEEGNEQFKKGDYIEAESSYSRALEMCPSC), 155 to 188 (SILFSNRAAARMKQDKKEMAINDCSKAIQLNPSY), and 189 to 222 (IRAILRRAELYEKTDKLDEALEDYKSILEKDPSI).

In terms of assembly, interacts with the GAP domain of NF1. Interacts (via TPR repeats) with HSP90AA1 and HSPA8.

This chain is Tetratricopeptide repeat protein 1 (TTC1), found in Homo sapiens (Human).